The following is a 443-amino-acid chain: Probable glycine dehydrogenase (decarboxylating) subunit 1 (443 aa).

The protein belongs to the GcvP family. N-terminal subunit subfamily. In terms of assembly, the glycine cleavage system is composed of four proteins: P, T, L and H. In this organism, the P 'protein' is a heterodimer of two subunits.

It catalyses the reaction N(6)-[(R)-lipoyl]-L-lysyl-[glycine-cleavage complex H protein] + glycine + H(+) = N(6)-[(R)-S(8)-aminomethyldihydrolipoyl]-L-lysyl-[glycine-cleavage complex H protein] + CO2. The glycine cleavage system catalyzes the degradation of glycine. The P protein binds the alpha-amino group of glycine through its pyridoxal phosphate cofactor; CO(2) is released and the remaining methylamine moiety is then transferred to the lipoamide cofactor of the H protein. The sequence is that of Probable glycine dehydrogenase (decarboxylating) subunit 1 from Oleidesulfovibrio alaskensis (strain ATCC BAA-1058 / DSM 17464 / G20) (Desulfovibrio alaskensis).